The primary structure comprises 266 residues: Hydroxyethylthiazole kinase (266 aa).

M44 lines the substrate pocket. ATP is bound by residues K120 and T166. G193 contributes to the substrate binding site.

Belongs to the Thz kinase family. Requires Mg(2+) as cofactor.

It carries out the reaction 5-(2-hydroxyethyl)-4-methylthiazole + ATP = 4-methyl-5-(2-phosphooxyethyl)-thiazole + ADP + H(+). The protein operates within cofactor biosynthesis; thiamine diphosphate biosynthesis; 4-methyl-5-(2-phosphoethyl)-thiazole from 5-(2-hydroxyethyl)-4-methylthiazole: step 1/1. In terms of biological role, catalyzes the phosphorylation of the hydroxyl group of 4-methyl-5-beta-hydroxyethylthiazole (THZ). The sequence is that of Hydroxyethylthiazole kinase from Syntrophomonas wolfei subsp. wolfei (strain DSM 2245B / Goettingen).